Reading from the N-terminus, the 317-residue chain is Aspartate carbamoyltransferase catalytic subunit (317 aa).

The carbamoyl phosphate site is built by Arg-66 and Thr-67. Lys-94 provides a ligand contact to L-aspartate. 3 residues coordinate carbamoyl phosphate: Arg-116, His-144, and Gln-147. L-aspartate-binding residues include Arg-177 and Arg-231. Residues Gly-272 and Pro-273 each coordinate carbamoyl phosphate.

The protein belongs to the aspartate/ornithine carbamoyltransferase superfamily. ATCase family. As to quaternary structure, heterododecamer (2C3:3R2) of six catalytic PyrB chains organized as two trimers (C3), and six regulatory PyrI chains organized as three dimers (R2).

The catalysed reaction is carbamoyl phosphate + L-aspartate = N-carbamoyl-L-aspartate + phosphate + H(+). Its pathway is pyrimidine metabolism; UMP biosynthesis via de novo pathway; (S)-dihydroorotate from bicarbonate: step 2/3. Functionally, catalyzes the condensation of carbamoyl phosphate and aspartate to form carbamoyl aspartate and inorganic phosphate, the committed step in the de novo pyrimidine nucleotide biosynthesis pathway. In Nitrobacter hamburgensis (strain DSM 10229 / NCIMB 13809 / X14), this protein is Aspartate carbamoyltransferase catalytic subunit.